Consider the following 291-residue polypeptide: Acetylglutamate kinase (291 aa).

Substrate is bound by residues 64 to 65, Arg86, and Asn190; that span reads GG.

The protein belongs to the acetylglutamate kinase family. ArgB subfamily.

Its subcellular location is the cytoplasm. It catalyses the reaction N-acetyl-L-glutamate + ATP = N-acetyl-L-glutamyl 5-phosphate + ADP. Its pathway is amino-acid biosynthesis; L-arginine biosynthesis; N(2)-acetyl-L-ornithine from L-glutamate: step 2/4. Its function is as follows. Catalyzes the ATP-dependent phosphorylation of N-acetyl-L-glutamate. The polypeptide is Acetylglutamate kinase (Leptospira borgpetersenii serovar Hardjo-bovis (strain JB197)).